The chain runs to 532 residues: Phosphoenolpyruvate carboxykinase (ATP) (532 aa).

3 residues coordinate substrate: Arg-60, Tyr-194, and Lys-200. ATP-binding positions include Lys-200, His-219, and Gly-237–Thr-245. Positions 200 and 219 each coordinate Mn(2+). Position 258 (Asp-258) interacts with Mn(2+). ATP is bound by residues Glu-286, Arg-324, and Thr-449. Substrate is bound at residue Arg-324.

This sequence belongs to the phosphoenolpyruvate carboxykinase (ATP) family. Mn(2+) serves as cofactor.

It is found in the cytoplasm. The catalysed reaction is oxaloacetate + ATP = phosphoenolpyruvate + ADP + CO2. The protein operates within carbohydrate biosynthesis; gluconeogenesis. Its function is as follows. Involved in the gluconeogenesis. Catalyzes the conversion of oxaloacetate (OAA) to phosphoenolpyruvate (PEP) through direct phosphoryl transfer between the nucleoside triphosphate and OAA. The polypeptide is Phosphoenolpyruvate carboxykinase (ATP) (Ruegeria sp. (strain TM1040) (Silicibacter sp.)).